A 26-amino-acid chain; its full sequence is Mu-theraphotoxin-Phlo2a (26 aa).

Disulfide bonds link Cys2–Cys16, Cys9–Cys21, and Cys15–Cys25.

Belongs to the neurotoxin 30 (phrixotoxin) family. In terms of tissue distribution, expressed by the venom gland.

Its subcellular location is the secreted. Functionally, gating-modifier toxin that non-selectively inhibits voltage-gated sodium channel Nav by shifting the threshold for channel activation to more positive potentials. This toxin moderately inhibits human Nav1.2/SCN2A (IC(50)=404 nM), Nav1.5/SCN5A (IC(50)=218 nM) and Nav1.7/SCN9A (IC(50)=333 nM). Inhibition of Nav1.7 is voltage-dependent, with lower inhibition at more positive test pulses. The chain is Mu-theraphotoxin-Phlo2a from Phlogius sp. (Tarantula spider).